The following is a 421-amino-acid chain: Homoserine dehydrogenase (421 aa).

Residues Val-15, Ala-34, and Val-44 each contribute to the NAD(+) site. Val-15 contacts NADP(+). Val-15 contributes to the NADPH binding site. The NADP(+) site is built by Arg-46 and Lys-103. 2 residues coordinate NADPH: Arg-46 and Lys-103. Residues Glu-125, Val-128, Gly-130, and Ile-132 each coordinate Na(+). 2 residues coordinate NADP(+): Gly-183 and Glu-186. L-homoserine-binding residues include Glu-186 and Asp-197. Lys-201 functions as the Proton donor in the catalytic mechanism. Gly-298 provides a ligand contact to NAD(+). NADP(+) is bound at residue Gly-298. Gly-298 contributes to the NADPH binding site. One can recognise an ACT domain in the interval 343–418; it reads YARLLVSDEK…SVLDTPKMIR (76 aa).

This sequence belongs to the homoserine dehydrogenase family. It depends on a metal cation as a cofactor.

The enzyme catalyses L-homoserine + NADP(+) = L-aspartate 4-semialdehyde + NADPH + H(+). The catalysed reaction is L-homoserine + NAD(+) = L-aspartate 4-semialdehyde + NADH + H(+). Its pathway is amino-acid biosynthesis; L-methionine biosynthesis via de novo pathway; L-homoserine from L-aspartate: step 3/3. It functions in the pathway amino-acid biosynthesis; L-threonine biosynthesis; L-threonine from L-aspartate: step 3/5. In terms of biological role, catalyzes the conversion of L-aspartate-beta-semialdehyde (L-Asa) to L-homoserine (L-Hse), the third step in the biosynthesis of threonine and methionine from aspartate. The chain is Homoserine dehydrogenase (hom) from Helicobacter pylori (strain ATCC 700392 / 26695) (Campylobacter pylori).